A 207-amino-acid polypeptide reads, in one-letter code: dITP/XTP pyrophosphatase (207 aa).

Thr11 to Lys16 contacts substrate. Asp72 serves as the catalytic Proton acceptor. Residue Asp72 participates in Mg(2+) binding. Residues Ser73, Phe154 to Asp157, Lys177, and His182 to Arg183 contribute to the substrate site.

Belongs to the HAM1 NTPase family. In terms of assembly, homodimer. Requires Mg(2+) as cofactor.

It catalyses the reaction XTP + H2O = XMP + diphosphate + H(+). The enzyme catalyses dITP + H2O = dIMP + diphosphate + H(+). It carries out the reaction ITP + H2O = IMP + diphosphate + H(+). Functionally, pyrophosphatase that catalyzes the hydrolysis of nucleoside triphosphates to their monophosphate derivatives, with a high preference for the non-canonical purine nucleotides XTP (xanthosine triphosphate), dITP (deoxyinosine triphosphate) and ITP. Seems to function as a house-cleaning enzyme that removes non-canonical purine nucleotides from the nucleotide pool, thus preventing their incorporation into DNA/RNA and avoiding chromosomal lesions. The sequence is that of dITP/XTP pyrophosphatase from Thermus thermophilus (strain ATCC BAA-163 / DSM 7039 / HB27).